Here is a 337-residue protein sequence, read N- to C-terminus: UDP-N-acetylenolpyruvoylglucosamine reductase (337 aa).

The FAD-binding PCMH-type domain maps to 16–187 (ALPGRAARYQ…TSVIFRLAKA (172 aa)). Arg-160 is an active-site residue. Catalysis depends on Ser-237, which acts as the Proton donor. Glu-333 is an active-site residue.

FAD serves as cofactor.

Its subcellular location is the cytoplasm. It carries out the reaction UDP-N-acetyl-alpha-D-muramate + NADP(+) = UDP-N-acetyl-3-O-(1-carboxyvinyl)-alpha-D-glucosamine + NADPH + H(+). It functions in the pathway cell wall biogenesis; peptidoglycan biosynthesis. Functionally, cell wall formation. In Dechloromonas aromatica (strain RCB), this protein is UDP-N-acetylenolpyruvoylglucosamine reductase.